Reading from the N-terminus, the 323-residue chain is Putative CRISPR-associated protein SSO1401 (323 aa).

Sometimes seen associated with the aCascade ribonucleoprotein complex, minimally composed of Csa2 and Cas5a, which binds crRNA. Other probable components of aCascade in strain P1 are Cas6 and Csa5, while SSO1399, Cas5b (SSO1400) and SSO1401 have sometimes been seen weakly associated. The Csa2-Cas5a-crRNA complex also binds target DNA homologous to crRNA, probably forming an R-loop. Purified aCascade forms a filament about 6 nm in width.

Its function is as follows. CRISPR (clustered regularly interspaced short palindromic repeat) is an adaptive immune system that provides protection against mobile genetic elements (viruses, transposable elements and conjugative plasmids). CRISPR clusters contain spacers, sequences complementary to antecedent mobile elements, and target invading nucleic acids. CRISPR clusters are transcribed and processed into CRISPR RNA (crRNA). This is Putative CRISPR-associated protein SSO1401 from Saccharolobus solfataricus (strain ATCC 35092 / DSM 1617 / JCM 11322 / P2) (Sulfolobus solfataricus).